The primary structure comprises 343 residues: N-acetyl-gamma-glutamyl-phosphate reductase (343 aa).

C149 is an active-site residue.

The protein belongs to the NAGSA dehydrogenase family. Type 1 subfamily.

It is found in the cytoplasm. The enzyme catalyses N-acetyl-L-glutamate 5-semialdehyde + phosphate + NADP(+) = N-acetyl-L-glutamyl 5-phosphate + NADPH + H(+). Its pathway is amino-acid biosynthesis; L-arginine biosynthesis; N(2)-acetyl-L-ornithine from L-glutamate: step 3/4. Functionally, catalyzes the NADPH-dependent reduction of N-acetyl-5-glutamyl phosphate to yield N-acetyl-L-glutamate 5-semialdehyde. This Methanococcus maripaludis (strain C5 / ATCC BAA-1333) protein is N-acetyl-gamma-glutamyl-phosphate reductase.